A 318-amino-acid polypeptide reads, in one-letter code: Thymidylate synthase (318 aa).

DUMP contacts are provided by residues Arg25 and 180 to 181 (RR). The active-site Nucleophile is Cys200. DUMP is bound by residues 220–223 (RSGD), Asn231, and 261–263 (HIY). Asp223 provides a ligand contact to (6R)-5,10-methylene-5,6,7,8-tetrahydrofolate. (6R)-5,10-methylene-5,6,7,8-tetrahydrofolate is bound at residue Ala317.

It belongs to the thymidylate synthase family. Bacterial-type ThyA subfamily. In terms of assembly, homodimer.

It localises to the cytoplasm. The catalysed reaction is dUMP + (6R)-5,10-methylene-5,6,7,8-tetrahydrofolate = 7,8-dihydrofolate + dTMP. It functions in the pathway pyrimidine metabolism; dTTP biosynthesis. Functionally, catalyzes the reductive methylation of 2'-deoxyuridine-5'-monophosphate (dUMP) to 2'-deoxythymidine-5'-monophosphate (dTMP) while utilizing 5,10-methylenetetrahydrofolate (mTHF) as the methyl donor and reductant in the reaction, yielding dihydrofolate (DHF) as a by-product. This enzymatic reaction provides an intracellular de novo source of dTMP, an essential precursor for DNA biosynthesis. The polypeptide is Thymidylate synthase (Bacillus cytotoxicus (strain DSM 22905 / CIP 110041 / 391-98 / NVH 391-98)).